Reading from the N-terminus, the 517-residue chain is MEWLIYIVILFVGIAAGAFFGISVGRKRAEEALEKKLKAAKEDAESIIKSAEKEASEIKKKAIIEAREEAHQIREEIEKERKKREEEIKQLEERLLKREEMLSKREELIDKRENYVENLKIELESKAKEIEEKAKEIERRFIELAGITHEQAREIVLQEAREKYEHEIAKFFVQIKTRYEDEADKYAKKIIADAIQRYAPEYIGEVTISTVALPNDDMKGRLIGREGRNIRTFEKITGVDLIIDDTPEMVTLSSFNPLRREVARRTIEKLVQDGRIHPARIEEMYEKAKAEVEREIKEAGQDAVITVGVGGLHPEIIKLLGRLKFRTSYGQNVLAHSVEVAQIAGLLAAELGLNVDKAKRGGLLHDIGKAIDHEVEGSHTDIGAEMLKRYGESDEIINMVMAHHGQEEPITPEAAIVAAADAISAARPGARREDVENYIKRLMKLEEIAKSYKYVENAYAIQAGREIRVIVQPDKTDDATIEKLAHDIATRIENELQYPGVLKVVVIREKRSVSYAK.

The chain crosses the membrane as a helical span at residues 4-24 (LIYIVILFVGIAAGAFFGISV). Residues 207-267 (TISTVALPND…LRREVARRTI (61 aa)) enclose the KH domain. The HD domain maps to 333-426 (VLAHSVEVAQ…VAAADAISAA (94 aa)).

It belongs to the RNase Y family.

Its subcellular location is the cell membrane. Endoribonuclease that initiates mRNA decay. This Fervidobacterium nodosum (strain ATCC 35602 / DSM 5306 / Rt17-B1) protein is Ribonuclease Y.